A 263-amino-acid polypeptide reads, in one-letter code: Izumo sperm-egg fusion protein 3 (263 aa).

A signal peptide spans 1-22; that stretch reads MGDLWVLLFSSLSLAAFHGVRG. Residues 23 to 176 lie on the Extracellular side of the membrane; sequence CLECDPKFTE…EDPKTAENRE (154 aa). Residues Asn-98 and Asn-128 are each glycosylated (N-linked (GlcNAc...) asparagine). Residues 177–197 form a helical membrane-spanning segment; the sequence is ISLYLIFIAEAVILASAVLLF. Residues 198–263 lie on the Cytoplasmic side of the membrane; it reads HVCISHRRKM…CAESEMQTGT (66 aa). Residues 241 to 263 form a disordered region; it reads GRSNSNSLTGEPTCAESEMQTGT.

It belongs to the Izumo family. Monomer and homodimer. Sperm-specific (at protein level).

The protein localises to the cell membrane. Its subcellular location is the cytoplasmic vesicle. It is found in the secretory vesicle. It localises to the acrosome inner membrane. Functionally, plays an important role in the biogenesis of the acrosome during sperm development. This chain is Izumo sperm-egg fusion protein 3 (Izumo3), found in Mus musculus (Mouse).